Consider the following 366-residue polypeptide: MASAVLSSVPTTASRFALLQVDSGSGSDSEPGKGKGRNTGKSQTLGSKSTTNEKKREKRRKKKEQQQSEANELRNLAFKKIPQKSSHAVCNAQHDLPLSNPVQKDSREENWQEWRQRDEQLTSEMFEADLEKALLLSKLEYEEHKKEYEDAENTSTQSKVMNKKDKRKNHQGKDRPLTVSLKDFHSEDHISKKTEELSSSQTLSHDGGFFNRLEDDVHKILIREKRREQLTEYNGTDNCTAHEHNQEVVLKDGRIERLKLELERKDAEIQKLKNVITQWEAKYKEVKARNAQLLKMLQEGEMKDKAEILLQVDESQSIKNELTIQVTSLHAALEQERSKVKVLQAELAKYQGGRKGKRNSESDQCR.

The interval 1–95 is interaction with IRS1; the sequence is MASAVLSSVP…SHAVCNAQHD (95 aa). 2 disordered regions span residues 20–110 and 147–177; these read QVDS…REEN and EYED…DRPL. Phosphoserine is present on residues S23, S25, and S27. Positions 39-50 are enriched in polar residues; that stretch reads TGKSQTLGSKST. Positions 47-77 form a coiled coil; that stretch reads SKSTTNEKKREKRRKKKEQQQSEANELRNLA. S106 is subject to Phosphoserine; by PKG. 2 coiled-coil regions span residues 128 to 160 and 243 to 353; these read ADLE…QSKV and EHNQ…YQGG.

It belongs to the GKAP1 family. In terms of assembly, interacts with PRKG1 and IRS1.

Its subcellular location is the golgi apparatus. In terms of biological role, regulates insulin-dependent IRS1 tyrosine phosphorylation in adipocytes by modulating the availability of IRS1 to IR tyrosine kinase. Its association with IRS1 is required for insulin-induced translocation of SLC2A4 to the cell membrane. Involved in TNF-induced impairment of insulin-dependent IRS1 tyrosine phosphorylation. The chain is G kinase-anchoring protein 1 (GKAP1) from Homo sapiens (Human).